The primary structure comprises 628 residues: Kinesin-like protein tea2 (628 aa).

The segment at 2–122 (SSSSSKPVNT…TTSQQTNSKG (121 aa)) is interaction with mal3. Position 82 is a phosphoserine (Ser-82). One can recognise a Kinesin motor domain in the interval 132 to 460 (GIITSIRIRP…LKFASRAQNL (329 aa)). 218 to 225 (GMTGTGKT) serves as a coordination point for ATP. Residues 530 to 557 (LRMEELLSDHNFEIADLRDELQDKEQII) are a coiled coil. The segment at 588-628 (VTRGSRSSSDQFSNETKTEILPDDQQQSKKDSVTQETQLLS) is disordered. Over residues 589 to 602 (TRGSRSSSDQFSNE) the composition is skewed to polar residues. The segment covering 603-620 (TKTEILPDDQQQSKKDSV) has biased composition (basic and acidic residues).

It belongs to the TRAFAC class myosin-kinesin ATPase superfamily. Kinesin family. Interacts with mal3 and tip1.

The protein localises to the cytoplasm. Its subcellular location is the cytoskeleton. Promotes microtubule growth, possibly through interactions with the microtubule end, and is important for establishing and maintaining polarized growth along the long axis of the cell. Acts as a kinesin motor protein that moves along microtubules and is required for proper localization of tea1 and tip1 to the cell tips and microtubules, respectively. ATPase activity stimulated via interaction with mal3. In Schizosaccharomyces pombe (strain 972 / ATCC 24843) (Fission yeast), this protein is Kinesin-like protein tea2.